The chain runs to 153 residues: Penitrem biosynthesis cluster 1 protein I (153 aa).

The protein operates within secondary metabolite biosynthesis. Functionally, part of the gene cluster that mediates the biosynthesis of the indole diterpenes penitrems. The geranylgeranyl diphosphate (GGPP) synthase ptmG catalyzes the first step in penitrem biosynthesis via conversion of farnesyl pyrophosphate and isopentyl pyrophosphate into geranylgeranyl pyrophosphate (GGPP). Condensation of indole-3-glycerol phosphate with GGPP by the prenyl transferase ptmC then forms 3-geranylgeranylindole (3-GGI). Epoxidation by the FAD-dependent monooxygenase ptmM leads to a epoxidized-GGI that is substrate of the terpene cyclase ptmB for cyclization to yield paspaline. Paspaline is subsequently converted to 13-desoxypaxilline by the cytochrome P450 monooxygenase ptmP, the latter being then converted to paxilline by the cytochrome P450 monooxygenase ptmQ. Paxilline is converted to beta-paxitriol via C-10 ketoreduction by the short-chain dehydrogenase ptmH which can be monoprenylated at the C-20 by the indole diterpene prenyltransferase ptmD. A two-step elimination (acetylation and elimination) process performed by the O-acetyltransferase ptmV and ptmI leads to the production of the prenylated form of penijanthine. The FAD-linked oxidoreductase ptmO then converts the prenylated form of penijanthine into PC-M5 which is in turn transformed into PC-M4 by the aromatic dimethylallyltransferase ptmE. Five sequential oxidative transformations performed by the cytochrome P450 monooxygenases ptmK, ptmU, ptmL, ptmN and ptmJ yield the various penitrem compounds. PtmK, ptmU and ptmM are involved in the formation of the key bicyclic ring of penitrem C via the formation of the intermediates secopenitrem D and penitrem D. PtmL catalyzes the epoxidation of penitrem D and C to yield penitrem B and F, respectively. PtmJ catalyzes the last benzylic hydroxylation to convert penitrem B to prenitrem E and penitrem F to penitrem A. In Penicillium ochrochloron, this protein is Penitrem biosynthesis cluster 1 protein I.